A 110-amino-acid chain; its full sequence is Small ribosomal subunit protein bS16 (110 aa).

Over residues 81–104 the composition is skewed to basic and acidic residues; that stretch reads VRPAEVLGKQKQEKERSAKKKDAA. The tract at residues 81-110 is disordered; that stretch reads VRPAEVLGKQKQEKERSAKKKDAAASETSE.

It belongs to the bacterial ribosomal protein bS16 family.

The polypeptide is Small ribosomal subunit protein bS16 (Prochlorococcus marinus (strain NATL2A)).